A 223-amino-acid polypeptide reads, in one-letter code: MKGMRGRLFVMTGASGVGKGTVRAKVLERTRLFYSISMTTRPPRPGEVDGVDYYFVDRPTFEALVREDGFLEYAEYVGHLYGTPRAPVERALSRGEDVLLEIEVQGALQVKRAVPEAVLIFLLPPSLSELKRRLVYRGKDSPEKIQKRLEQAEWEIRNAHLFDYVVVNDVLEEAVADFLAILTAERRRSGRMGEALEMALRRDLALEAELDEILRRRYGGTGH.

A Guanylate kinase-like domain is found at 6-183 (GRLFVMTGAS…AVADFLAILT (178 aa)). 13–20 (GASGVGKG) lines the ATP pocket.

Belongs to the guanylate kinase family.

The protein resides in the cytoplasm. The catalysed reaction is GMP + ATP = GDP + ADP. Essential for recycling GMP and indirectly, cGMP. This chain is Guanylate kinase, found in Thermus thermophilus (strain ATCC 27634 / DSM 579 / HB8).